A 393-amino-acid polypeptide reads, in one-letter code: N-acyl-phosphatidylethanolamine-hydrolyzing phospholipase D (393 aa).

Methionine 1 carries the N-acetylmethionine modification. Residues 1–16 (MDENESNQSLMTSSQY) are compositionally biased toward polar residues. The interval 1 to 40 (MDENESNQSLMTSSQYPKEAVRKRQNSARNSGASDSSRFS) is disordered. Zn(2+)-binding residues include histidine 185 and histidine 187. Tyrosine 188 provides a ligand contact to an N-acyl-1,2-diacyl-sn-glycero-3-phosphoethanolamine. Positions 189, 190, and 253 each coordinate Zn(2+). Deoxycholate contacts are provided by lysine 256 and methionine 260. Aspartate 284 provides a ligand contact to Zn(2+). Histidine 321 contributes to the an N-acyl-1,2-diacyl-sn-glycero-3-phosphoethanolamine binding site. Histidine 343 is a Zn(2+) binding site. Alanine 348 contributes to the deoxycholate binding site.

It belongs to the NAPE-PLD family. In terms of assembly, homodimer. Bile acids promote the assembly of inactive monomers into an active dimer and enable catalysis. Zn(2+) is required as a cofactor. Widely expressed. Highest expression in brain, kidney and testis (at protein level). Expressed in adipose tissue (at protein level).

The protein resides in the golgi apparatus membrane. The protein localises to the early endosome membrane. It localises to the nucleus envelope. It is found in the nucleus. Its subcellular location is the nucleoplasm. It carries out the reaction an N-acyl-1,2-diacyl-sn-glycero-3-phosphoethanolamine + H2O = an N-acylethanolamine + a 1,2-diacyl-sn-glycero-3-phosphate + H(+). It catalyses the reaction N-butanoyl-1-hexadecanoyl-2-(9Z,12Z-octadecadienoyl)-sn-glycero-3-phosphoethanolamine + H2O = N-butanoyl ethanolamine + 1-hexadecanoyl-2-(9Z,12Z-octadecadienoyl)-sn-glycero-3-phosphate + H(+). The enzyme catalyses N-hexanoyl-1-hexadecanoyl-2-(9Z,12Z-octadecadienoyl)-sn-glycero-3-phosphoethanolamine + H2O = N-hexanoyl ethanolamine + 1-hexadecanoyl-2-(9Z,12Z-octadecadienoyl)-sn-glycero-3-phosphate + H(+). The catalysed reaction is N-octanoyl-1-hexadecanoyl-2-(9Z,12Z-octadecadienoyl)-sn-glycero-3-phosphoethanolamine + H2O = N-octanoyl ethanolamine + 1-hexadecanoyl-2-(9Z,12Z-octadecadienoyl)-sn-glycero-3-phosphate + H(+). It carries out the reaction N-decanoyl-1-hexadecanoyl-2-(9Z,12Z-octadecadienoyl)-sn-glycero-3-phosphoethanolamine + H2O = N-decanoyl ethanolamine + 1-hexadecanoyl-2-(9Z,12Z-octadecadienoyl)-sn-glycero-3-phosphate + H(+). It catalyses the reaction N-dodecanoyl-1,2-di-(9Z-octadecenoyl)-sn-glycero-3-phosphoethanolamine + H2O = N-dodecanoylethanolamine + 1,2-di-(9Z-octadecenoyl)-sn-glycero-3-phosphate + H(+). The enzyme catalyses N-tetradecanoyl-1,2-di-(9Z-octadecenoyl)-sn-glycero-3-phosphoethanolamine + H2O = N-tetradecanoylethanolamine + 1,2-di-(9Z-octadecenoyl)-sn-glycero-3-phosphate + H(+). The catalysed reaction is N-hexadecanoyl-1,2-di-(9Z-octadecenoyl)-sn-glycero-3-phosphoethanolamine + H2O = N-hexadecanoylethanolamine + 1,2-di-(9Z-octadecenoyl)-sn-glycero-3-phosphate + H(+). It carries out the reaction N,1-dihexadecanoyl-2-(9Z,12Z-octadecadienoyl)-sn-glycero-3-phosphoethanolamine + H2O = 1-hexadecanoyl-2-(9Z,12Z-octadecadienoyl)-sn-glycero-3-phosphate + N-hexadecanoylethanolamine + H(+). It catalyses the reaction N-octadecanoyl-1,2-di-(9Z-octadecenoyl)-sn-glycero-3-phosphoethanolamine + H2O = N-octadecanoyl ethanolamine + 1,2-di-(9Z-octadecenoyl)-sn-glycero-3-phosphate + H(+). The enzyme catalyses N,1,2-tri-(9Z-octadecenoyl)-sn-glycero-3-phosphoethanolamine + H2O = N-(9Z-octadecenoyl) ethanolamine + 1,2-di-(9Z-octadecenoyl)-sn-glycero-3-phosphate + H(+). The catalysed reaction is N-(5Z,8Z,11Z,14Z-eicosatetraenoyl)-1,2-diacyl-sn-glycero-3-phosphoethanolamine + H2O = N-(5Z,8Z,11Z,14Z-eicosatetraenoyl)-ethanolamine + a 1,2-diacyl-sn-glycero-3-phosphate + H(+). It carries out the reaction N-(5Z,8Z,11Z,14Z-eicosatetraenoyl)-1,2-di-(9Z-octadecenoyl)-sn-glycero-3-phosphoethanolamine + H2O = N-(5Z,8Z,11Z,14Z-eicosatetraenoyl)-ethanolamine + 1,2-di-(9Z-octadecenoyl)-sn-glycero-3-phosphate + H(+). It catalyses the reaction 1-O-(1Z-octadecenoyl)-2-(9Z-octadecenoyl)-sn-glycero-3-phospho-N-hexadecanoyl-ethanolamine + H2O = 1-O-(1Z-octadecenoyl)-2-(9Z-octadecenoyl)-sn-glycero-3-phosphate + N-hexadecanoylethanolamine + H(+). The enzyme catalyses N,1-diacyl-sn-glycero-3-phosphoethanolamine + H2O = an N-acylethanolamine + a 1-acyl-sn-glycero-3-phosphate + H(+). The catalysed reaction is N,1-dihexadecanoyl-sn-glycero-3-phosphoethanolamine + H2O = N-hexadecanoylethanolamine + 1-hexadecanoyl-sn-glycero-3-phosphate + H(+). It carries out the reaction N-(5Z,8Z,11Z,14Z-eicosatetraenoyl)-1-(9Z-octadecenoyl)-sn-glycero-3-phosphoethanolamine + H2O = N-(5Z,8Z,11Z,14Z-eicosatetraenoyl)-ethanolamine + 1-(9Z-octadecenoyl)-sn-glycero-3-phosphate + H(+). With respect to regulation, activated by divalent cations. Activated by bile acids and their conjugates, except for lithocholic acid which is rather inhibitory. Binding of deoxycholic acid favors the selective release of anandamide and likely other unsatured long FAEs. Inhibited by phosphatidylethanolamines. D-type phospholipase that hydrolyzes N-acyl-phosphatidylethanolamines (NAPEs) to produce bioactive N-acylethanolamines/fatty acid ethanolamides (NAEs/FAEs) and phosphatidic acid. Cleaves the terminal phosphodiester bond of diacyl- and alkenylacyl-NAPEs, primarily playing a role in the generation of long-chain saturated and monounsaturated NAEs in the brain. May control NAPE homeostasis in dopaminergic neuron membranes and regulate neuron survival, partly through RAC1 activation. As a regulator of lipid metabolism in the adipose tissue, mediates the crosstalk between adipocytes, gut microbiota and immune cells to control body temperature and weight. In particular, regulates energy homeostasis by promoting cold-induced brown or beige adipocyte differentiation program to generate heat from fatty acids and glucose. Has limited D-type phospholipase activity toward N-acyl lyso-NAPEs. The protein is N-acyl-phosphatidylethanolamine-hydrolyzing phospholipase D (NAPEPLD) of Homo sapiens (Human).